We begin with the raw amino-acid sequence, 240 residues long: Putative truncated effector protein hopW1-2 (240 aa).

Residues 1 to 32 (MSPAQIIRTSHSFPPSFTGTSSSAENSHAQSP) are disordered. The span at 9 to 23 (TSHSFPPSFTGTSSS) shows a compositional bias: low complexity.

Belongs to the HopW family.

The sequence is that of Putative truncated effector protein hopW1-2 (hopW1-2) from Pseudomonas syringae pv. maculicola.